The chain runs to 1205 residues: Caskin-2 (1205 aa).

ANK repeat units lie at residues 48 to 77 (DGFS…SVDI), 81 to 110 (NGMR…SVNA), 114 to 143 (DGQI…NPCH), 147 to 176 (GKKT…CVSL), 188 to 217 (NFTT…EINK), and 220 to 249 (KMGT…DVNI). Residues 281–347 (SGILKVRALK…PPSIVEVISK (67 aa)) enclose the SH3 domain. Composition is skewed to polar residues over residues 377 to 388 (SPGSQLGINPDT) and 398 to 411 (GSES…SGQS). The disordered stretch occupies residues 377 to 411 (SPGSQLGINPDTSVAGDRHSVGSESSVRSAGSGQS). SAM domains are found at residues 468-531 (KDAE…LIVA) and 537-601 (QIPV…LLDL). The segment covering 666-687 (RRSFSQESISSRSQGSGHSQES) has biased composition (low complexity). Disordered stretches follow at residues 666–689 (RRSF…ESAS), 784–964 (RPGR…QRHL), 984–1054 (QIAA…SQEP), and 1132–1155 (SEAS…KGPP). The segment covering 823–840 (SSMSSAEGQSPEGQSSVK) has biased composition (polar residues). The segment covering 908–919 (ISSQHSSSESIP) has biased composition (low complexity). Residues 942–959 (DATSELSPTQESQLQSAE) are compositionally biased toward polar residues. Basic and acidic residues predominate over residues 1009-1037 (KNEEHDFNLTESDTVKRRPKVKEKEEESP). Composition is skewed to polar residues over residues 1042 to 1054 (ANNS…SQEP) and 1137 to 1155 (REQT…KGPP).

The chain is Caskin-2 (caskin2) from Xenopus laevis (African clawed frog).